Reading from the N-terminus, the 910-residue chain is Harmonin (910 aa).

The tract at residues 1-86 is N-terminal domain; it reads MDRKVAREFR…LTPRRSRKLK (86 aa). PDZ domains are found at residues 87–171 and 211–295; these read EVRL…GLIP and KVFI…AGRE. The tract at residues 194-833 is mediates interaction with MYO7B; sequence GVRGGLGSPG…KAWNQGGDWI (640 aa). Serine 219 carries the phosphoserine modification. Coiled coils occupy residues 299–377 and 417–482; these read TDRE…WEED and TIRK…DLEE. A disordered region spans residues 563 to 688; it reads VMPHPPSVNS…PPRGPGVSTI (126 aa). Pro residues predominate over residues 564-582; the sequence is MPHPPSVNSPSKVPAPPVL. A compositionally biased stretch (low complexity) spans 583-596; that stretch reads PSSGHVSSSSSPWV. Residues 599 to 611 are compositionally biased toward pro residues; the sequence is TPPPIPIPPPPSI. Over residues 650–664 the composition is skewed to polar residues; it reads NTHSGKPSSSPTTER. The region spanning 752 to 839 is the PDZ 3 domain; sequence DVRLLRIKKE…GDWIDLVVAV (88 aa). The interval 890 to 910 is disordered; that stretch reads KSRERNQTDPSWRPASSAPSP. Over residues 899-910 the composition is skewed to low complexity; sequence PSWRPASSAPSP.

In terms of assembly, part of the IMAC/intermicrovillar adhesion complex/intermicrovillar tip-link complex composed of ANKS4B, MYO7B, USH1C, CDHR2 and CDHR5. Part of a complex composed of USH1C, USH1G and MYO7A. Interacts with F-actin. Interacts with USH2A. Interacts with SLC4A7. Interacts (via PDZ1 domain) with the C-terminus of USHBP1. Interacts (via N-terminus and PDZ 2 domain) with CDH23. Interacts with USH1G. Interacts with MYO7B. Interacts with CDHR2 and CDHR5; may mediate their interaction with MYO7B at the microvilli tip. Interacts (via PDZ 1 domain) with ANKS4B. Interacts (via PDZ 1 domain) with DOCK4. In terms of tissue distribution, detected in stereocilia of cochlear hair cells (at protein level). Isoform 1 is expressed in the eye, cochlea, vestibule, heart, kidney, small intestine and testis; it is barely visible in skeletal muscle, liver, and lung and is absent from the brain. Isoforms 2 and 3 are expressed in the cochlea and vestibule.

It is found in the cytoplasm. It localises to the cytosol. The protein localises to the cytoskeleton. The protein resides in the cell projection. Its subcellular location is the microvillus. In terms of biological role, anchoring/scaffolding protein that is a part of the functional network formed by USH1C, USH1G, CDH23 and MYO7A that mediates mechanotransduction in cochlear hair cells. Required for normal development and maintenance of cochlear hair cell bundles. As part of the intermicrovillar adhesion complex/IMAC plays a role in brush border differentiation, controlling microvilli organization and length. Probably plays a central regulatory role in the assembly of the complex, recruiting CDHR2, CDHR5 and MYO7B to the microvilli tips. In Mus musculus (Mouse), this protein is Harmonin (Ush1c).